The following is a 370-amino-acid chain: Caffeic acid 3-O-methyltransferase (370 aa).

A propeptide spanning residues 1–2 (MG) is cleaved from the precursor. 135–141 (MNQDKVL) is a substrate binding site. The substrate binding stretch occupies residues 167–185 (AFEYHGTDPRFNKVFNRGM). Residues Gly-213, Asp-236, Asp-256, Met-257, and Lys-270 each contribute to the S-adenosyl-L-methionine site. His-274 acts as the Proton acceptor in catalysis.

Belongs to the class I-like SAM-binding methyltransferase superfamily. Cation-independent O-methyltransferase family. COMT subfamily. Homodimer.

The enzyme catalyses (E)-caffeate + S-adenosyl-L-methionine = (E)-ferulate + S-adenosyl-L-homocysteine + H(+). The protein operates within aromatic compound metabolism; phenylpropanoid biosynthesis. Functionally, catalyzes the conversion of caffeic acid to ferulic acid and of 5-hydroxyferulic acid to sinapic acid. The resulting products may subsequently be converted to the corresponding alcohols that are incorporated into lignins. In Clarkia breweri (Fairy fans), this protein is Caffeic acid 3-O-methyltransferase (COMT).